Consider the following 160-residue polypeptide: Afimbrial adhesin AFA-III (160 aa).

The first 21 residues, 1–21, serve as a signal peptide directing secretion; that stretch reads MKKLAIMAAASMVFAVSSAHA. Residues 22–75 form a receptor-binding region; that stretch reads GFTPSGTTGTTKLTVTEECQVRVGDLTVAKTRGQLTDAAPIGPVTVQALGCNAR.

This sequence belongs to the Dr-adhesin family.

Its subcellular location is the fimbrium. Hemagglutinins of uropathogenic E.coli mediate adherence to the upper urinary tract. These adhesins bind to the Dr blood group antigen and also agglutinate human erythrocytes in the presence of D-mannose (mannose-resistant hemagglutination (MRHA)). In Escherichia coli, this protein is Afimbrial adhesin AFA-III (afaE3).